Reading from the N-terminus, the 132-residue chain is Secreted RxLR effector protein BLR08 (132 aa).

An N-terminal signal peptide occupies residues 1–22 (MRHKCLLAMAVVASMAFYSVIS). Residue Asn25 is glycosylated (N-linked (GlcNAc...) asparagine). Positions 36–57 (NRRLRPRVEPTANELDKQSDVD) are disordered. The RxLR-dEER signature appears at 37–83 (RRLRPRVEPTANELDKQSDVDTKLEADRRLGYPGESGFMLEGELEER). The helical transmembrane segment at 111 to 131 (FFLGLFASVIGVSIISACYGI) threads the bilayer.

The protein belongs to the RxLR effector family. As to quaternary structure, interacts with host transcription factor NAC069.

The protein resides in the secreted. Its subcellular location is the host endoplasmic reticulum membrane. Its function is as follows. Secreted effector that inhibits stress-induced relocalization of the transcription factor NAC069 to the nucleus, thus affecting its broad role in abiotic and biotic stress responses. In Bremia lactucae (Lettuce downy mildew), this protein is Secreted RxLR effector protein BLR08.